The sequence spans 343 residues: N-malonyltransferase FDB2 (343 aa).

Catalysis depends on cysteine 107, which acts as the Acyl-thioester intermediate. Histidine 155 serves as the catalytic Proton acceptor. Aspartate 170 is a catalytic residue.

The protein belongs to the arylamine N-acetyltransferase family.

It functions in the pathway xenobiotic degradation. Its function is as follows. N-malonyltransferase; part of the Fusarium detoxification of benzoxazolinone cluster involved in the degradation of benzoxazolinones produced by the host plant. Maize, wheat, and rye produce the 2 benzoxazinone phytoanticipins 2,4-dihy-droxy-7-methoxy-1,4-benzoxazin-3-one (DIMBOA) and 2,4-dihydroxy-1,4-benzoxazin-3-one (DIBOA) that, due to their inherent instability once released, spontaneously degrade to the more stable corresponding benzoxazolinones, 6-methoxy-2-benzoxazolinone (MBOA) and 2-benzoxazolinone (BOA), respectively. The first step in the detoxification of benzoxazolinones involves the hydrolysis of the cyclic ester bond of benzoxazolinones by the gamma-lactamase FDB1 to aminophenols. FDB1 is able to convert BOA into 2-aminophenol (2-AP), as well as MBOA into 5-methoxy-2-aminophenol (2-AMP). The N-malonyltransferase FDB2 then metabolizes aminophenols via N-malonylation to non-toxic malonamic acids. FDB2 converts 2-AP into N-(2-hydroxyphenyl) malonamic acid (HPMA) and 2-AMP into N-(2-hydroxy-4-methoxyphenyl) malonamic acid (HMPMA). The cluster also contains 2 transcription factors (FDB3 and FPSE_08121), an aldo-keto reductase (FPSE_08125) that possibly associates with a ketone component of BOA and MBOA degradation, an esterase (FPSE_08126), an acyl-CoA transferase (FPSE_08120), a solute carrier protein (FPSE_08119) and a transmembrane transporter (FPSE_08127) proposed to shuttle metabolites of benzoxazolinone degradation. The sequence is that of N-malonyltransferase FDB2 from Fusarium pseudograminearum (strain CS3096) (Wheat and barley crown-rot fungus).